Consider the following 176-residue polypeptide: Large ribosomal subunit protein eL20A (176 aa).

This sequence belongs to the eukaryotic ribosomal protein eL20 family. As to quaternary structure, component of the large ribosomal subunit (LSU). Mature yeast ribosomes consist of a small (40S) and a large (60S) subunit. The 40S small subunit contains 1 molecule of ribosomal RNA (18S rRNA) and at least 33 different proteins. The large 60S subunit contains 3 rRNA molecules (25S, 5.8S and 5S rRNA) and at least 46 different proteins. eL20 forms multiple interactions with RNA and proteins in the central protuberance, connecting components of core functional centers that are located far apart.

It localises to the cytoplasm. Component of the ribosome, a large ribonucleoprotein complex responsible for the synthesis of proteins in the cell. The small ribosomal subunit (SSU) binds messenger RNAs (mRNAs) and translates the encoded message by selecting cognate aminoacyl-transfer RNA (tRNA) molecules. The large subunit (LSU) contains the ribosomal catalytic site termed the peptidyl transferase center (PTC), which catalyzes the formation of peptide bonds, thereby polymerizing the amino acids delivered by tRNAs into a polypeptide chain. The nascent polypeptides leave the ribosome through a tunnel in the LSU and interact with protein factors that function in enzymatic processing, targeting, and the membrane insertion of nascent chains at the exit of the ribosomal tunnel. The chain is Large ribosomal subunit protein eL20A (rpl2001) from Schizosaccharomyces pombe (strain 972 / ATCC 24843) (Fission yeast).